Here is a 301-residue protein sequence, read N- to C-terminus: GTP cyclohydrolase FolE2 (301 aa).

Belongs to the GTP cyclohydrolase IV family.

The catalysed reaction is GTP + H2O = 7,8-dihydroneopterin 3'-triphosphate + formate + H(+). It functions in the pathway cofactor biosynthesis; 7,8-dihydroneopterin triphosphate biosynthesis; 7,8-dihydroneopterin triphosphate from GTP: step 1/1. Converts GTP to 7,8-dihydroneopterin triphosphate. In Pseudomonas savastanoi pv. phaseolicola (strain 1448A / Race 6) (Pseudomonas syringae pv. phaseolicola (strain 1448A / Race 6)), this protein is GTP cyclohydrolase FolE2.